The chain runs to 208 residues: MAEEAQYEYLVPLEKYLSAGVRLGTRLSNKYLEERGFIYAVRPDGLRIFDIKKIDERLRIAAKLIARYPPDRVLVHTTRPYGFKPVQMFCKFVGCKALTGRFIPGMLTNPNLSNYLEVDLLFVVDPRLDSQAVAEAAKMGIPVVALVDTDTPHQYIDFMIPCNNKGRKSLALIFWVLARQVLRERGELKPDQDLPVPPEEFETRLVQT.

The protein belongs to the universal ribosomal protein uS2 family.

This chain is Small ribosomal subunit protein uS2, found in Pyrobaculum calidifontis (strain DSM 21063 / JCM 11548 / VA1).